A 199-amino-acid polypeptide reads, in one-letter code: MQVYTGPITRLIEEFSKLPGVGRKTAQRLAFHIINMNTNDVEALSKAIIDAKREIRYCSICCNITDTDPCSMCSNKSRDSSVICVVEDPRDVAAMERTREFKGQYHVLNGVISPMDGIGPDMLKIKELIQRLGNQEVKEIIMATNPTIEGEATAMYIARLVKPMGIKVTRIAHGLPVGGDLEYADEVTISKALEGRREI.

The C4-type zinc-finger motif lies at 58–73 (CSICCNITDTDPCSMC). One can recognise a Toprim domain in the interval 81-176 (SVICVVEDPR…KVTRIAHGLP (96 aa)).

This sequence belongs to the RecR family.

Functionally, may play a role in DNA repair. It seems to be involved in an RecBC-independent recombinational process of DNA repair. It may act with RecF and RecO. The chain is Recombination protein RecR from Clostridioides difficile (strain 630) (Peptoclostridium difficile).